A 309-amino-acid polypeptide reads, in one-letter code: Mitochondrial fission regulator 1-like (309 aa).

Positions 189–221 (DVTEEDEEEEEEEDREEEEEDVSELVPDPMPPV) are disordered. Residues 190 to 211 (VTEEDEEEEEEEDREEEEEDVS) are compositionally biased toward acidic residues. Position 253 is a phosphoserine (serine 253).

Belongs to the MTFR1 family.

The protein resides in the mitochondrion outer membrane. Mitochondrial protein required for adaptation of miochondrial dynamics to metabolic changes. Regulates mitochondrial morphology at steady state and mediates AMPK-dependent stress-induced mitochondrial fragmentation via the control of OPA1 levels. This is Mitochondrial fission regulator 1-like (mtfr1l) from Danio rerio (Zebrafish).